Here is a 315-residue protein sequence, read N- to C-terminus: Nucleotide-binding protein PsycPRwf_2129 (315 aa).

Residue Gly29–Thr36 coordinates ATP. Asp79 to Thr82 provides a ligand contact to GTP.

It belongs to the RapZ-like family.

Functionally, displays ATPase and GTPase activities. This is Nucleotide-binding protein PsycPRwf_2129 from Psychrobacter sp. (strain PRwf-1).